The primary structure comprises 114 residues: MSNQVLCCVVLCLLGANTVDGGITQSPKYLFRKEGQNVTLSCEQNLNHDAMYWYRQDPGQGLRLIYYSQIVNDFQKGDIAEGYSVSREKKESFPLTVTSAQKNPTAFYLCASSI.

Residues 1-21 (MSNQVLCCVVLCLLGANTVDG) form the signal peptide. Residues 22–114 (GITQSPKYLF…TAFYLCASSI (93 aa)) enclose the Ig-like domain. An N-linked (GlcNAc...) asparagine glycan is attached at asparagine 37. Cysteine 42 and cysteine 110 are oxidised to a cystine.

In terms of assembly, alpha-beta TR is a heterodimer composed of an alpha and beta chain; disulfide-linked. The alpha-beta TR is associated with the transmembrane signaling CD3 coreceptor proteins to form the TR-CD3 (TcR or TCR). The assembly of alpha-beta TR heterodimers with CD3 occurs in the endoplasmic reticulum where a single alpha-beta TR heterodimer associates with one CD3D-CD3E heterodimer, one CD3G-CD3E heterodimer and one CD247 homodimer forming a stable octameric structure. CD3D-CD3E and CD3G-CD3E heterodimers preferentially associate with TR alpha and TR beta chains, respectively. The association of the CD247 homodimer is the last step of TcR assembly in the endoplasmic reticulum and is required for transport to the cell surface. (Microbial infection) Interacts with Staphylococcus aureus enterotoxin type B/SEB.

It localises to the cell membrane. V region of the variable domain of T cell receptor (TR) beta chain that participates in the antigen recognition. Alpha-beta T cell receptors are antigen specific receptors which are essential to the immune response and are present on the cell surface of T lymphocytes. Recognize peptide-major histocompatibility (MH) (pMH) complexes that are displayed by antigen presenting cells (APC), a prerequisite for efficient T cell adaptive immunity against pathogens. Binding of alpha-beta TR to pMH complex initiates TR-CD3 clustering on the cell surface and intracellular activation of LCK that phosphorylates the ITAM motifs of CD3G, CD3D, CD3E and CD247 enabling the recruitment of ZAP70. In turn ZAP70 phosphorylates LAT, which recruits numerous signaling molecules to form the LAT signalosome. The LAT signalosome propagates signal branching to three major signaling pathways, the calcium, the mitogen-activated protein kinase (MAPK) kinase and the nuclear factor NF-kappa-B (NF-kB) pathways, leading to the mobilization of transcription factors that are critical for gene expression and essential for T cell growth and differentiation. The T cell repertoire is generated in the thymus, by V-(D)-J rearrangement. This repertoire is then shaped by intrathymic selection events to generate a peripheral T cell pool of self-MH restricted, non-autoaggressive T cells. Post-thymic interaction of alpha-beta TR with the pMH complexes shapes TR structural and functional avidity. The polypeptide is T cell receptor beta variable 19 (Homo sapiens (Human)).